Reading from the N-terminus, the 386-residue chain is Interleukin-13 receptor subunit alpha-2 (386 aa).

An N-terminal signal peptide occupies residues 1 to 21 (MAFIHLDVGFLYTLLVCTAFG). The Extracellular segment spans residues 22–338 (SMLSNAEIKV…CWKGDIWKET (317 aa)). Fibronectin type-III domains lie at 33–133 (PPQD…SPQG), 138–234 (KIQD…LQNI), and 239–338 (PPDY…WKET). Cysteines 64 and 112 form a disulfide. A glycan (N-linked (GlcNAc...) asparagine) is linked at asparagine 114. 2 disulfide bridges follow: cysteine 144–cysteine 154 and cysteine 183–cysteine 196. Residues asparagine 214 and asparagine 298 are each glycosylated (N-linked (GlcNAc...) asparagine). A disulfide bond links cysteine 268 and cysteine 315. Positions 321-325 (WSEWS) match the WSXWS motif motif. Residues 339–359 (LVFFLIPFAFVSIFVLVITCL) form a helical membrane-spanning segment. Over 360 to 386 (LLYKQRALLKTIFHTKKEVFSHQDTFC) the chain is Cytoplasmic.

This sequence belongs to the type I cytokine receptor family. Type 5 subfamily. As to quaternary structure, interacts with IL4RA. Interacts with high affinity to interleukin-13 (IL13), but not to interleukin-4 (IL4). In terms of processing, cleaved by MMP8 leading to a soluble form that is also able to interact with IL13. As to expression, expressed in kidney, placenta, liver, skeletal muscle and thymus. Expression was not seen in whole blood and heart.

It is found in the cell membrane. In terms of biological role, cell surface receptor that plays a role in the regulation of IL-13-mediated responses. Functions as a decoy receptor that inhibits IL-13- and IL-4-mediated signal transduction via the JAK-STAT pathway and thereby modulates immune responses and inflammation. Serves as a functional signaling receptor for IL-13 in an alternative pathway involving AP-1 ultimately leading to the production of TGFB1. This Canis lupus familiaris (Dog) protein is Interleukin-13 receptor subunit alpha-2 (IL13RA2).